Reading from the N-terminus, the 60-residue chain is MAVPARHTSKAKKNKRRTHYKLTAPSVQFDETTGDYSRSHRVSLKGYYKGRKIAKANEAK.

The disordered stretch occupies residues methionine 1–leucine 22. The span at histidine 7 to tyrosine 20 shows a compositional bias: basic residues.

Belongs to the bacterial ribosomal protein bL32 family.

This Streptococcus pyogenes serotype M3 (strain ATCC BAA-595 / MGAS315) protein is Large ribosomal subunit protein bL32.